Here is a 296-residue protein sequence, read N- to C-terminus: PYK10-binding protein 2 (296 aa).

The segment at 1 to 20 is disordered; that stretch reads MAQKVEAKGGKGGNQWDDGS. Alanine 2 carries the post-translational modification N-acetylalanine. 2 consecutive Jacalin-type lectin domains span residues 2–142 and 150–293; these read AQKV…YFAP and AKPL…HVRP.

Belongs to the jacalin lectin family. Component of the PYK10 complex, at least composed of PYK10/BGLU23, BGLU21, BGLU22, JAL22, JAL23, PBP1/JAL30, PBP2/JAL31, JAL32, JAL33, JAL34, JAL35, GLL22 and GLL23.

In terms of biological role, polymerizer-type lectin that may facilitate the correct polymerization of BGLU23/PYK10 upon tissue damage. Activates BGLU21, BGLU22 and BGLU23. This is PYK10-binding protein 2 (PBP2) from Arabidopsis thaliana (Mouse-ear cress).